A 212-amino-acid chain; its full sequence is Deoxyribose-phosphate aldolase (212 aa).

Aspartate 89 (proton donor/acceptor) is an active-site residue. Lysine 151 serves as the catalytic Schiff-base intermediate with acetaldehyde. Lysine 180 acts as the Proton donor/acceptor in catalysis.

Belongs to the DeoC/FbaB aldolase family. DeoC type 1 subfamily.

Its subcellular location is the cytoplasm. It catalyses the reaction 2-deoxy-D-ribose 5-phosphate = D-glyceraldehyde 3-phosphate + acetaldehyde. It functions in the pathway carbohydrate degradation; 2-deoxy-D-ribose 1-phosphate degradation; D-glyceraldehyde 3-phosphate and acetaldehyde from 2-deoxy-alpha-D-ribose 1-phosphate: step 2/2. In terms of biological role, catalyzes a reversible aldol reaction between acetaldehyde and D-glyceraldehyde 3-phosphate to generate 2-deoxy-D-ribose 5-phosphate. In Clostridium botulinum (strain Loch Maree / Type A3), this protein is Deoxyribose-phosphate aldolase.